The sequence spans 375 residues: Queuine tRNA-ribosyltransferase (375 aa).

Asp90 serves as the catalytic Proton acceptor. Substrate contacts are provided by residues 90–94, Asp144, Gln193, and Gly220; that span reads DSGGF. The interval 251-257 is RNA binding; that stretch reads GVGTPED. Asp270 (nucleophile) is an active-site residue. Residues 275–279 are RNA binding; important for wobble base 34 recognition; sequence TRNAR. 4 residues coordinate Zn(2+): Cys308, Cys310, Cys313, and His339.

It belongs to the queuine tRNA-ribosyltransferase family. In terms of assembly, homodimer. Within each dimer, one monomer is responsible for RNA recognition and catalysis, while the other monomer binds to the replacement base PreQ1. Zn(2+) is required as a cofactor.

The catalysed reaction is 7-aminomethyl-7-carbaguanine + guanosine(34) in tRNA = 7-aminomethyl-7-carbaguanosine(34) in tRNA + guanine. The protein operates within tRNA modification; tRNA-queuosine biosynthesis. Its function is as follows. Catalyzes the base-exchange of a guanine (G) residue with the queuine precursor 7-aminomethyl-7-deazaguanine (PreQ1) at position 34 (anticodon wobble position) in tRNAs with GU(N) anticodons (tRNA-Asp, -Asn, -His and -Tyr). Catalysis occurs through a double-displacement mechanism. The nucleophile active site attacks the C1' of nucleotide 34 to detach the guanine base from the RNA, forming a covalent enzyme-RNA intermediate. The proton acceptor active site deprotonates the incoming PreQ1, allowing a nucleophilic attack on the C1' of the ribose to form the product. After dissociation, two additional enzymatic reactions on the tRNA convert PreQ1 to queuine (Q), resulting in the hypermodified nucleoside queuosine (7-(((4,5-cis-dihydroxy-2-cyclopenten-1-yl)amino)methyl)-7-deazaguanosine). The polypeptide is Queuine tRNA-ribosyltransferase (Janthinobacterium sp. (strain Marseille) (Minibacterium massiliensis)).